Reading from the N-terminus, the 572-residue chain is Arginine--tRNA ligase (572 aa).

The short motif at 122–132 (PNLAKEMHVGH) is the 'HIGH' region element.

Belongs to the class-I aminoacyl-tRNA synthetase family. As to quaternary structure, monomer.

It localises to the cytoplasm. It carries out the reaction tRNA(Arg) + L-arginine + ATP = L-arginyl-tRNA(Arg) + AMP + diphosphate. The protein is Arginine--tRNA ligase of Neisseria meningitidis serogroup B (strain ATCC BAA-335 / MC58).